The primary structure comprises 66 residues: Alpha-like toxin BeM9 (66 aa).

Residues 2 to 66 (RDAYIAKPHN…VPIRIPGKCH (65 aa)) enclose the LCN-type CS-alpha/beta domain. 4 cysteine pairs are disulfide-bonded: C12–C65, C16–C38, C24–C48, and C28–C50.

The protein belongs to the long (4 C-C) scorpion toxin superfamily. Sodium channel inhibitor family. Alpha subfamily. As to expression, expressed by the venom gland.

Its subcellular location is the secreted. In terms of biological role, alpha toxins bind voltage-independently at site-3 of sodium channels (Nav) and inhibit the inactivation of the activated channels, thereby blocking neuronal transmission. This toxin is active on both mammals and insects, since it inhibits inactivation of rNav1.4/SCN4A, hNav1.5/SCN5A, mNav1.6/SCN8A and insect BgNav1 and DmNav1 channels. In vivo, it shows paralytic activity in mice. In Mesobuthus eupeus (Lesser Asian scorpion), this protein is Alpha-like toxin BeM9.